The primary structure comprises 267 residues: Undecaprenyl-diphosphatase (267 aa).

The next 8 helical transmembrane spans lie at 1 to 21 (MSYFESFILALIQGFTEFLPI), 39 to 59 (QGLAFDVAVHVGTLAAVVLYF), 83 to 103 (AKLAWLIVLATIPACLFGFVM), 111 to 131 (LRSAWVIATTTIVFGLLLWYV), 149 to 169 (ALFIGLAQAVAIIPGTSRSGA), 189 to 209 (FLMSIPIIVLAGSYLGLKLVT), 218 to 238 (FLLTGIITSFISAYICIHFFL), and 245 to 265 (GMTPFVIYRLVLGVGLFAFLL).

This sequence belongs to the UppP family.

It is found in the cell inner membrane. It carries out the reaction di-trans,octa-cis-undecaprenyl diphosphate + H2O = di-trans,octa-cis-undecaprenyl phosphate + phosphate + H(+). In terms of biological role, catalyzes the dephosphorylation of undecaprenyl diphosphate (UPP). Confers resistance to bacitracin. This Vibrio cholerae serotype O1 (strain ATCC 39315 / El Tor Inaba N16961) protein is Undecaprenyl-diphosphatase.